The chain runs to 412 residues: Argininosuccinate synthase (412 aa).

Residues 10-18 (AYSGGLDTS) and Ala-36 each bind ATP. L-citrulline contacts are provided by Tyr-87 and Ser-92. At Tyr-87 the chain carries Phosphotyrosine. Lys-112 bears the N6-acetyllysine mark. Tyr-113 is subject to Phosphotyrosine. 115–123 (SHGATGKGN) provides a ligand contact to ATP. Positions 119, 123, and 124 each coordinate L-aspartate. Position 123 (Asn-123) interacts with L-citrulline. Arg-127 is an L-citrulline binding site. An N6-acetyllysine; by CLOCK mark is found at Lys-165 and Lys-176. 2 residues coordinate L-citrulline: Ser-180 and Ser-189. The residue at position 180 (Ser-180) is a Phosphoserine. Residue Thr-219 is modified to Phosphothreonine. Residues Glu-270 and Tyr-282 each contribute to the L-citrulline site.

Belongs to the argininosuccinate synthase family. Type 1 subfamily. As to quaternary structure, homotetramer. Interacts with NMRAL1. Interacts with CLOCK; in a circadian manner. Forms tissue-specific complexes with ASL, SLC7A1, HSP90AA1 and nitric oxide synthase NOS1, NOS2 or NOS3; the complex regulates cell-autonomous L-arginine synthesis and citrulline recycling while channeling extracellular L-arginine to nitric oxide synthesis pathway. Acetylated by CLOCK in a circadian manner which negatively regulates its enzyme activity. Deacetylated by histone deacetylases. Expressed in adult liver.

It localises to the cytoplasm. The protein localises to the cytosol. It carries out the reaction L-citrulline + L-aspartate + ATP = 2-(N(omega)-L-arginino)succinate + AMP + diphosphate + H(+). Its pathway is amino-acid biosynthesis; L-arginine biosynthesis; L-arginine from L-ornithine and carbamoyl phosphate: step 2/3. It participates in nitrogen metabolism; urea cycle; (N(omega)-L-arginino)succinate from L-aspartate and L-citrulline: step 1/1. One of the enzymes of the urea cycle, the metabolic pathway transforming neurotoxic amonia produced by protein catabolism into inocuous urea in the liver of ureotelic animals. Catalyzes the formation of arginosuccinate from aspartate, citrulline and ATP and together with ASL it is responsible for the biosynthesis of arginine in most body tissues. The polypeptide is Argininosuccinate synthase (Homo sapiens (Human)).